Consider the following 202-residue polypeptide: Holliday junction branch migration complex subunit RuvA (202 aa).

Residues methionine 1 to serine 62 are domain I. Residues aspartate 63–threonine 141 form a domain II region. A flexible linker region spans residues leucine 142–threonine 151. The segment at threonine 152–lysine 202 is domain III.

Belongs to the RuvA family. As to quaternary structure, homotetramer. Forms an RuvA(8)-RuvB(12)-Holliday junction (HJ) complex. HJ DNA is sandwiched between 2 RuvA tetramers; dsDNA enters through RuvA and exits via RuvB. An RuvB hexamer assembles on each DNA strand where it exits the tetramer. Each RuvB hexamer is contacted by two RuvA subunits (via domain III) on 2 adjacent RuvB subunits; this complex drives branch migration. In the full resolvosome a probable DNA-RuvA(4)-RuvB(12)-RuvC(2) complex forms which resolves the HJ.

The protein localises to the cytoplasm. Functionally, the RuvA-RuvB-RuvC complex processes Holliday junction (HJ) DNA during genetic recombination and DNA repair, while the RuvA-RuvB complex plays an important role in the rescue of blocked DNA replication forks via replication fork reversal (RFR). RuvA specifically binds to HJ cruciform DNA, conferring on it an open structure. The RuvB hexamer acts as an ATP-dependent pump, pulling dsDNA into and through the RuvAB complex. HJ branch migration allows RuvC to scan DNA until it finds its consensus sequence, where it cleaves and resolves the cruciform DNA. This Levilactobacillus brevis (strain ATCC 367 / BCRC 12310 / CIP 105137 / JCM 1170 / LMG 11437 / NCIMB 947 / NCTC 947) (Lactobacillus brevis) protein is Holliday junction branch migration complex subunit RuvA.